A 186-amino-acid chain; its full sequence is Intraflagellar transport protein 27 homolog (186 aa).

GTP is bound by residues 12-19 (GDPTVGKT), 64-68 (DSAGK), and 123-126 (NKTD).

This sequence belongs to the small GTPase superfamily. Rab family. As to quaternary structure, component of the IFT complex B, at least composed of IFT20, IFT22, IFT25, IFT27, IFT46, IFT52, TRAF3IP1/IFT54, IFT57, IFT74, IFT80, IFT81, and IFT88. Interacts with IFT25. Interacts with IFT70B. Interacts with RABL2/RABL2A; binding is equal in the presence of GTP or GDP. Interacts with IFT88. Interacts with ARL6; recognizes and binds with the GTP-free form of ARL6.

The protein resides in the cell projection. Its subcellular location is the cilium. It localises to the cytoplasm. The protein localises to the flagellum. Small GTPase-like component of the intraflagellar transport (IFT) complex B that promotes the exit of the BBSome complex from cilia via its interaction with ARL6. Not involved in entry of the BBSome complex into cilium. Prevents aggregation of GTP-free ARL6. Required for hedgehog signaling. Forms a subcomplex within the IFT complex B with IFT25. Its role in intraflagellar transport is mainly seen in tissues rich in ciliated cells such as kidney and testis. Essential for male fertility, spermiogenesis and sperm flagella formation. Plays a role in the early development of the kidney. May be involved in the regulation of ureteric bud initiation. The sequence is that of Intraflagellar transport protein 27 homolog (IFT27) from Bos taurus (Bovine).